The following is a 481-amino-acid chain: GTPase Der (481 aa).

2 EngA-type G domains span residues 3-166 and 194-367; these read PVVA…ESDF and IKLA…MSAT. Residues 9-16, 56-60, 118-121, 200-207, 247-251, and 312-315 contribute to the GTP site; these read GRPNVGKS, DTGGI, NKVD, GKPNVGKS, DTAGV, and NKWD. The KH-like domain maps to 368–452; sequence KRINTALLTQ…PIKIEFREGN (85 aa).

Belongs to the TRAFAC class TrmE-Era-EngA-EngB-Septin-like GTPase superfamily. EngA (Der) GTPase family. Associates with the 50S ribosomal subunit.

In terms of biological role, GTPase that plays an essential role in the late steps of ribosome biogenesis. The polypeptide is GTPase Der (Alteromonas mediterranea (strain DSM 17117 / CIP 110805 / LMG 28347 / Deep ecotype)).